The sequence spans 497 residues: Cytochrome P450 monooxygenase 151 (497 aa).

The chain crosses the membrane as a helical span at residues 1 to 21; sequence MTDLVPVYYAFAGVVAALLFY. N-linked (GlcNAc...) asparagine glycosylation is found at asparagine 292 and asparagine 397. Position 441 (cysteine 441) interacts with heme.

The protein belongs to the cytochrome P450 family. Heme is required as a cofactor.

It localises to the membrane. It functions in the pathway secondary metabolite biosynthesis. In terms of biological role, cytochrome P450 monooxygenase that is able to use dehydroabietic acid and testosterone as substrates for oxidation, suggesting that the natural substrate(s) may be structurally related to steroid compounds. This chain is Cytochrome P450 monooxygenase 151, found in Postia placenta (strain ATCC 44394 / Madison 698-R) (Brown rot fungus).